Here is a 262-residue protein sequence, read N- to C-terminus: Acyl-[acyl-carrier-protein]--UDP-N-acetylglucosamine O-acyltransferase (262 aa).

Belongs to the transferase hexapeptide repeat family. LpxA subfamily. Homotrimer.

The protein resides in the cytoplasm. It carries out the reaction a (3R)-hydroxyacyl-[ACP] + UDP-N-acetyl-alpha-D-glucosamine = a UDP-3-O-[(3R)-3-hydroxyacyl]-N-acetyl-alpha-D-glucosamine + holo-[ACP]. The protein operates within glycolipid biosynthesis; lipid IV(A) biosynthesis; lipid IV(A) from (3R)-3-hydroxytetradecanoyl-[acyl-carrier-protein] and UDP-N-acetyl-alpha-D-glucosamine: step 1/6. Functionally, involved in the biosynthesis of lipid A, a phosphorylated glycolipid that anchors the lipopolysaccharide to the outer membrane of the cell. The chain is Acyl-[acyl-carrier-protein]--UDP-N-acetylglucosamine O-acyltransferase from Aliivibrio fischeri (strain ATCC 700601 / ES114) (Vibrio fischeri).